A 176-amino-acid chain; its full sequence is MSAPRLIARHYHGHPHDESPRDCVVLDYDARFLRRKVLTCESGERLLVDLSHTTSLDHDGVLLLEGGGEIRVVAAPEPLLEVTADHLPRMAWHIGNRHTPCQIEASRLLIQRDHVIRAMLEQLGAQLREVEEPFTPEGGAYGHGRTHAHEHGHTNHHGQHHDHADHGHSHDHSHDQ.

The segment at 134 to 176 is disordered; sequence FTPEGGAYGHGRTHAHEHGHTNHHGQHHDHADHGHSHDHSHDQ. Over residues 161-176 the composition is skewed to basic and acidic residues; the sequence is HDHADHGHSHDHSHDQ.

This sequence belongs to the UreE family.

Its subcellular location is the cytoplasm. In terms of biological role, involved in urease metallocenter assembly. Binds nickel. Probably functions as a nickel donor during metallocenter assembly. In Ruegeria sp. (strain TM1040) (Silicibacter sp.), this protein is Urease accessory protein UreE.